A 187-amino-acid polypeptide reads, in one-letter code: Basic helix-loop-helix transcription factor scleraxis (187 aa).

Disordered regions lie at residues 21–83 (LSED…TNSV) and 140–163 (AFFH…QPKQ). Residues 34 to 43 (SDEKPFHLDA) are compositionally biased toward basic and acidic residues. Residues 50–72 (AGKRRSGKKAGRLHREPRQRHTA) are compositionally biased toward basic residues. Residues 67 to 119 (RQRHTANARERDRTNSVNTAFTALRTLIPTEPADRKLSKIETLRLASSYISHL) enclose the bHLH domain.

Efficient DNA binding requires dimerization with another bHLH protein. Dimerizes and binds the E-box consensus sequence with E12. As to expression, expressed in the intersomitic, the superficial proximomedial limb mesenchyme and the subectodermal mesenchyme.

It is found in the nucleus. In terms of biological role, plays an early essential role in mesoderm formation, as well as a later role in formation of somite-derived chondrogenic lineages. The chain is Basic helix-loop-helix transcription factor scleraxis (SCX) from Gallus gallus (Chicken).